The primary structure comprises 82 residues: Transcription elongation factor 1 homolog (82 aa).

Zn(2+)-binding residues include cysteine 26, cysteine 29, cysteine 50, and cysteine 53.

The protein belongs to the ELOF1 family.

The protein resides in the nucleus. In terms of biological role, transcription elongation factor implicated in the maintenance of proper chromatin structure in actively transcribed regions. In Drosophila melanogaster (Fruit fly), this protein is Transcription elongation factor 1 homolog.